Consider the following 75-residue polypeptide: UPF0291 protein lin1342 (75 aa).

The segment at 55-75 (IDPKGNDVTPHKIKQMRKNKK) is disordered. Over residues 65–75 (HKIKQMRKNKK) the composition is skewed to basic residues.

The protein belongs to the UPF0291 family.

It localises to the cytoplasm. This Listeria innocua serovar 6a (strain ATCC BAA-680 / CLIP 11262) protein is UPF0291 protein lin1342.